The sequence spans 174 residues: Sarcoplasmic calcium-binding protein (174 aa).

Residue Ser-1 is modified to N-acetylserine. 4 EF-hand domains span residues 3-38, 55-90, 91-126, and 125-160; these read LWVQ…FAKE, GVWD…NAKA, VVEG…LGLN, and LNPD…FFIN. Positions 16, 18, 20, and 27 each coordinate Ca(2+). The Ca(2+) site is built by Asp-104, Asn-106, Asp-108, Met-110, Glu-115, Asp-138, Asn-140, Asp-142, and Glu-149.

Its function is as follows. Like parvalbumins, SCPs seem to be more abundant in fast contracting muscles, but no functional relationship can be established from this distribution. This Perinereis vancaurica tetradentata (Sandworm) protein is Sarcoplasmic calcium-binding protein.